Here is a 207-residue protein sequence, read N- to C-terminus: Thymidine kinase (207 aa).

Residues 15 to 22 (GCMFSGKS) and 88 to 91 (DEIQ) each bind ATP. The active-site Proton acceptor is Glu-89. Cys-145, Cys-148, Cys-183, and His-186 together coordinate Zn(2+). The segment covering 184-198 (RHHHEVPGKPKKRYN) has biased composition (basic residues). The tract at residues 184 to 207 (RHHHEVPGKPKKRYNHPLAGHTGE) is disordered.

Belongs to the thymidine kinase family. As to quaternary structure, homotetramer.

The protein localises to the cytoplasm. It catalyses the reaction thymidine + ATP = dTMP + ADP + H(+). In Geobacillus kaustophilus (strain HTA426), this protein is Thymidine kinase.